Consider the following 128-residue polypeptide: MSTLVSLPTAAPAPDYQSIDRPLNFSNAAAAKVRELIQEEGNAELALRVYIQGGGCSGFQYGFEFDENRAEDDLAVATDGVTLLVDPLSLQYLMGAEVDYTESLTGAQFVIRNPNAKTTCGCGSSFSV.

Iron-sulfur cluster is bound by residues cysteine 56, cysteine 120, and cysteine 122.

This sequence belongs to the HesB/IscA family. Homodimer. Requires iron-sulfur cluster as cofactor.

Its function is as follows. Required for insertion of 4Fe-4S clusters for at least IspG. This Xanthomonas campestris pv. campestris (strain 8004) protein is Iron-sulfur cluster insertion protein ErpA.